The primary structure comprises 174 residues: Ribulose bisphosphate carboxylase small subunit, chloroplastic 1 (174 aa).

A chloroplast-targeting transit peptide spans 1-45; sequence MAPAVMASSATTVAPFQGLKSTAGLPVSRRSRGSLGSVSNGGRIR.

Belongs to the RuBisCO small chain family. Heterohexadecamer of 8 large and 8 small subunits.

It localises to the plastid. The protein resides in the chloroplast. In terms of biological role, ruBisCO catalyzes two reactions: the carboxylation of D-ribulose 1,5-bisphosphate, the primary event in carbon dioxide fixation, as well as the oxidative fragmentation of the pentose substrate. Both reactions occur simultaneously and in competition at the same active site. Although the small subunit is not catalytic it is essential for maximal activity. This chain is Ribulose bisphosphate carboxylase small subunit, chloroplastic 1, found in Triticum aestivum (Wheat).